Consider the following 329-residue polypeptide: MFKWLLKHHNQPHSLQLGLLDQPLPFWKPFLLFLPALLTTILFTIIPFFLSLQKGFSANSDLYDLSSQSFSLRTFQDLFSESNFVLGLRNSFLYSLISLPFSIIIAIVIASAIVFVYKKLLRGFWQTVFFLPYVTSGVAISIAFVYIFDSASGILNTVFNVNTKWLDSGSRDTFNALWAILIFGVWKNLAFNVLIISTAMLSVNPQLYKVASLDSANPVRQFFKITLPSIRPTLIFLTTLLILGGMQVFPLALFENKPEEAVANGGNSILLYIFQQIQSGNTNLAGAATLVLFVLGVCYGLVLRNGFYLIEWLQWKIKQLYVQKQLTLY.

The next 6 helical transmembrane spans lie at 30 to 50 (FLLF…PFFL), 96 to 116 (LISL…IVFV), 128 to 148 (VFFL…VYIF), 176 to 196 (ALWA…VLII), 234 to 254 (LIFL…LALF), and 283 to 303 (NLAG…GLVL). Residues 88 to 303 (LRNSFLYSLI…VLGVCYGLVL (216 aa)) form the ABC transmembrane type-1 domain.

This sequence belongs to the binding-protein-dependent transport system permease family. MalFG subfamily.

The protein resides in the cell membrane. In terms of biological role, probably part of a binding-protein-dependent transport system. Probably responsible for the translocation of the substrate across the membrane. This Mycoplasma genitalium (strain ATCC 33530 / DSM 19775 / NCTC 10195 / G37) (Mycoplasmoides genitalium) protein is Probable ABC transporter permease protein MG188.